A 220-amino-acid polypeptide reads, in one-letter code: Transcriptional regulatory protein SpaR (220 aa).

Positions 3–115 constitute a Response regulatory domain; it reads KILAVDDEKD…ELSARVNAHL (113 aa). Position 51 is a 4-aspartylphosphate (Asp-51). Residues 124–220 constitute a DNA-binding region (ompR/PhoB-type); it reads QSKRVISGFL…TVWGVGYKWE (97 aa).

In terms of processing, phosphorylated by SpaK.

Its subcellular location is the cytoplasm. Its function is as follows. Member of the two-component regulatory system SpaK/SpaR involved in the regulation of the biosynthesis of lantibiotic subtilin. SpaR may function as a regulatory protein. This Bacillus subtilis protein is Transcriptional regulatory protein SpaR (spaR).